The primary structure comprises 462 residues: MGKEKIHINIVVIGHVDSGKSTTTGHLIYKCGGIDKRTIEKFEKEAQEMGKGSFKYAWVLDKLKAERERGITIDIALWKFETAKYYVTIIDAPGHRDFIKNMITGTSQADCAVLIVAAGVGEFEAGISKNGQTREHALLAYTLGVKQLIVGVNKMDSTEPPFSEARFEEIKKEVSAYIKKIGYNPAAVAFVPISGWHGDNMLEASDRLPWYKGWNIERKEGKADGKTLLDALDAILPPSRPTEKPLRLPLQDVYKIGGIGTVPVGRVETGIIKPGMIVTFAPANITTEVKSVEMHHESLEQASPGDNVGFNVKNVSVKELRRGYVASDSKNNPARGSQDFFAQVIVLNHPGQISNGYTPVLDCHTAHIACKFAEIKEKCDRRTGKTTEAEPKFIKSGDAAMITLVPSKPLCVEAFSDFPPLGRFAVRDMRQTVAVGVIKSVNFKDPTAGKVTKAAEKAGKKK.

Glycine 2 is modified (blocked amino end (Gly)). Residues 5–242 (KIHINIVVIG…DAILPPSRPT (238 aa)) enclose the tr-type G domain. The tract at residues 14 to 21 (GHVDSGKS) is G1. GTP is bound at residue 14 to 21 (GHVDSGKS). Lysine 36 carries the post-translational modification N6,N6,N6-trimethyllysine. Position 55 is an N6-methyllysine (lysine 55). Residues 70 to 74 (GITID) are G2. Lysine 79 carries the N6,N6,N6-trimethyllysine modification. Residues 91–94 (DAPG) are G3. GTP contacts are provided by residues 91–95 (DAPGH) and 153–156 (NKMD). A G4 region spans residues 153–156 (NKMD). The segment at 194–196 (SGW) is G5. An N6,N6,N6-trimethyllysine mark is found at lysine 219 and lysine 318. The residue at position 374 (glutamate 374) is a 5-glutamyl glycerylphosphorylethanolamine.

It belongs to the TRAFAC class translation factor GTPase superfamily. Classic translation factor GTPase family. EF-Tu/EF-1A subfamily. Post-translationally, the N-terminus is blocked.

Its subcellular location is the cytoplasm. Its function is as follows. This protein promotes the GTP-dependent binding of aminoacyl-tRNA to the A-site of ribosomes during protein biosynthesis. The polypeptide is Elongation factor 1-alpha (Artemia salina (Brine shrimp)).